The primary structure comprises 306 residues: Ribonuclease Z (306 aa).

Residues His63, His65, Asp67, His68, His141, Asp211, and His269 each contribute to the Zn(2+) site. Asp67 serves as the catalytic Proton acceptor.

This sequence belongs to the RNase Z family. In terms of assembly, homodimer. The cofactor is Zn(2+).

The catalysed reaction is Endonucleolytic cleavage of RNA, removing extra 3' nucleotides from tRNA precursor, generating 3' termini of tRNAs. A 3'-hydroxy group is left at the tRNA terminus and a 5'-phosphoryl group is left at the trailer molecule.. Its function is as follows. Zinc phosphodiesterase, which displays some tRNA 3'-processing endonuclease activity. Probably involved in tRNA maturation, by removing a 3'-trailer from precursor tRNA. This is Ribonuclease Z from Staphylococcus epidermidis (strain ATCC 35984 / DSM 28319 / BCRC 17069 / CCUG 31568 / BM 3577 / RP62A).